The sequence spans 139 residues: Ribosome maturation factor RimP (139 aa).

Belongs to the RimP family.

It localises to the cytoplasm. Required for maturation of 30S ribosomal subunits. The protein is Ribosome maturation factor RimP of Syntrophomonas wolfei subsp. wolfei (strain DSM 2245B / Goettingen).